The primary structure comprises 230 residues: Cytidylate kinase (230 aa).

12–20 contacts ATP; the sequence is GPSGTGKST.

The protein belongs to the cytidylate kinase family. Type 1 subfamily.

It localises to the cytoplasm. The catalysed reaction is CMP + ATP = CDP + ADP. The enzyme catalyses dCMP + ATP = dCDP + ADP. The protein is Cytidylate kinase of Corynebacterium glutamicum (strain ATCC 13032 / DSM 20300 / JCM 1318 / BCRC 11384 / CCUG 27702 / LMG 3730 / NBRC 12168 / NCIMB 10025 / NRRL B-2784 / 534).